The sequence spans 228 residues: Urease accessory protein UreF (228 aa).

It belongs to the UreF family. UreD, UreF and UreG form a complex that acts as a GTP-hydrolysis-dependent molecular chaperone, activating the urease apoprotein by helping to assemble the nickel containing metallocenter of UreC. The UreE protein probably delivers the nickel.

The protein localises to the cytoplasm. Required for maturation of urease via the functional incorporation of the urease nickel metallocenter. The protein is Urease accessory protein UreF of Photorhabdus laumondii subsp. laumondii (strain DSM 15139 / CIP 105565 / TT01) (Photorhabdus luminescens subsp. laumondii).